The primary structure comprises 1077 residues: ATP-dependent helicase/deoxyribonuclease subunit B (1077 aa).

This sequence belongs to the helicase family. AddB/RexB type 2 subfamily. In terms of assembly, heterodimer of AddA and RexB. Requires Mg(2+) as cofactor.

The heterodimer acts as both an ATP-dependent DNA helicase and an ATP-dependent, dual-direction single-stranded exonuclease. Recognizes the chi site generating a DNA molecule suitable for the initiation of homologous recombination. This subunit has 5' -&gt; 3' nuclease activity but not helicase activity. The sequence is that of ATP-dependent helicase/deoxyribonuclease subunit B from Streptococcus agalactiae serotype III (strain NEM316).